A 333-amino-acid chain; its full sequence is Adenosine deaminase (333 aa).

The Zn(2+) site is built by H12 and H14. Substrate contacts are provided by H14, D16, and G170. Residue H197 coordinates Zn(2+). The Proton donor role is filled by E200. D278 provides a ligand contact to Zn(2+). D279 lines the substrate pocket.

It belongs to the metallo-dependent hydrolases superfamily. Adenosine and AMP deaminases family. Adenosine deaminase subfamily. Zn(2+) serves as cofactor.

The enzyme catalyses adenosine + H2O + H(+) = inosine + NH4(+). The catalysed reaction is 2'-deoxyadenosine + H2O + H(+) = 2'-deoxyinosine + NH4(+). Catalyzes the hydrolytic deamination of adenosine and 2-deoxyadenosine. In Escherichia coli (strain SE11), this protein is Adenosine deaminase.